The primary structure comprises 284 residues: Diaminopimelate epimerase (284 aa).

Residues N13 and N70 each coordinate substrate. Catalysis depends on C79, which acts as the Proton donor. Substrate contacts are provided by residues G80–N81, N167, N200, and E218–R219. The active-site Proton acceptor is C227. G228–T229 contributes to the substrate binding site.

The protein belongs to the diaminopimelate epimerase family. Homodimer.

It localises to the cytoplasm. It carries out the reaction (2S,6S)-2,6-diaminopimelate = meso-2,6-diaminopimelate. The protein operates within amino-acid biosynthesis; L-lysine biosynthesis via DAP pathway; DL-2,6-diaminopimelate from LL-2,6-diaminopimelate: step 1/1. Catalyzes the stereoinversion of LL-2,6-diaminopimelate (L,L-DAP) to meso-diaminopimelate (meso-DAP), a precursor of L-lysine and an essential component of the bacterial peptidoglycan. This is Diaminopimelate epimerase from Prochlorococcus marinus (strain NATL2A).